We begin with the raw amino-acid sequence, 413 residues long: Putative competence-damage inducible protein (413 aa).

The protein belongs to the CinA family.

The chain is Putative competence-damage inducible protein from Thermoanaerobacter pseudethanolicus (strain ATCC 33223 / 39E) (Clostridium thermohydrosulfuricum).